The sequence spans 799 residues: E3 UFM1-protein ligase 1 homolog (799 aa).

Positions 429–483 are disordered; it reads TTTTTTTQPSKKKDNLINSDDDDNQDNNKKSSKGKNKKSKQQQSSIQKLINDSED. Residues 458–468 show a composition bias toward basic residues; sequence KSSKGKNKKSK. The span at 469 to 478 shows a compositional bias: low complexity; that stretch reads QQQSSIQKLI.

The protein belongs to the UFL1 family.

E3 UFM1-protein ligase that mediates ufmylation of target proteins. The polypeptide is E3 UFM1-protein ligase 1 homolog (Dictyostelium discoideum (Social amoeba)).